A 366-amino-acid polypeptide reads, in one-letter code: ADP-ribosylarginine hydrolase Tri1 (366 aa).

The N-terminal extension stretch occupies residues 1–65 (MIDLREDTWT…LNTPPCLIPE (65 aa)). Positions 74–366 (GALVGLAIGD…LFYMAPEEDF (293 aa)) are ADP-ribosyl hydrolase domain. Thr116, Asp117, Asp118, Asp161, and Asp317 together coordinate Mg(2+).

Belongs to the ADP-ribosylglycohydrolase family. As to quaternary structure, forms a stable complex with cognate effector protein Tre1-Sp. Mg(2+) serves as cofactor.

It carries out the reaction N(omega)-(ADP-D-ribosyl)-L-arginyl-[protein] + H2O = ADP-D-ribose + L-arginyl-[protein]. Immunity component of a contact-dependent interbacterial competition system (also called effector-immunity systems). Acts as an arginine mono-ADP-ribosylhydrolase, mediating the removal of mono-ADP-ribose attached to arginine residues on proteins. De-ADP-ribosylates FtsZ, is able to act on other proteins as well. Neutralizes the toxic activity of cognate toxin Tre1-Sp. Expression of this protein alone in E.coli partially protects the cells against competition by wild-type S.proteamaculans. Neutralizes Tre1-Sp both by occluding its active site via its N-terminal extension and by hydrolyzing the ADP-ribosyl moiety from FtsZ; the 2 activities are dissociable by mutagenesis. The chain is ADP-ribosylarginine hydrolase Tri1 from Serratia proteamaculans (strain 568).